The following is a 354-amino-acid chain: Uroporphyrinogen decarboxylase (354 aa).

Substrate is bound by residues 27-31 (RQAGR), aspartate 77, tyrosine 154, serine 209, and histidine 327.

The protein belongs to the uroporphyrinogen decarboxylase family. In terms of assembly, homodimer.

It localises to the cytoplasm. It catalyses the reaction uroporphyrinogen III + 4 H(+) = coproporphyrinogen III + 4 CO2. It functions in the pathway porphyrin-containing compound metabolism; protoporphyrin-IX biosynthesis; coproporphyrinogen-III from 5-aminolevulinate: step 4/4. In terms of biological role, catalyzes the decarboxylation of four acetate groups of uroporphyrinogen-III to yield coproporphyrinogen-III. In Shewanella amazonensis (strain ATCC BAA-1098 / SB2B), this protein is Uroporphyrinogen decarboxylase.